The chain runs to 133 residues: Small ribosomal subunit protein uS8 (133 aa).

Residues 1-29 (MANHDPISDMLTRIRNASEKRHETTRIPA) form a disordered region. Over residues 16 to 25 (NASEKRHETT) the composition is skewed to basic and acidic residues.

It belongs to the universal ribosomal protein uS8 family. In terms of assembly, part of the 30S ribosomal subunit. Contacts proteins S5 and S12.

One of the primary rRNA binding proteins, it binds directly to 16S rRNA central domain where it helps coordinate assembly of the platform of the 30S subunit. The chain is Small ribosomal subunit protein uS8 from Prochlorococcus marinus (strain MIT 9211).